The chain runs to 537 residues: ATP synthase subunit beta 1 (537 aa).

164-171 (GGAGVGKT) provides a ligand contact to ATP. The tract at residues 471-537 (PKQSATEKNS…ESLEEPQNGR (67 aa)) is disordered. 2 stretches are compositionally biased toward polar residues: residues 473–498 (QSATEKNSSMNSDLKPSNSESNSPGP) and 507–528 (IPSSAKPNVSQPNTFKQDAQNE).

This sequence belongs to the ATPase alpha/beta chains family. F-type ATPases have 2 components, CF(1) - the catalytic core - and CF(0) - the membrane proton channel. CF(1) has five subunits: alpha(3), beta(3), gamma(1), delta(1), epsilon(1). CF(0) has three main subunits: a(1), b(2) and c(9-12). The alpha and beta chains form an alternating ring which encloses part of the gamma chain. CF(1) is attached to CF(0) by a central stalk formed by the gamma and epsilon chains, while a peripheral stalk is formed by the delta and b chains.

The protein resides in the cell inner membrane. The catalysed reaction is ATP + H2O + 4 H(+)(in) = ADP + phosphate + 5 H(+)(out). Functionally, produces ATP from ADP in the presence of a proton gradient across the membrane. The catalytic sites are hosted primarily by the beta subunits. This chain is ATP synthase subunit beta 1, found in Pseudoalteromonas atlantica (strain T6c / ATCC BAA-1087).